Reading from the N-terminus, the 92-residue chain is UPF0250 protein XCC3453 (92 aa).

It belongs to the UPF0250 family.

The protein is UPF0250 protein XCC3453 of Xanthomonas campestris pv. campestris (strain ATCC 33913 / DSM 3586 / NCPPB 528 / LMG 568 / P 25).